We begin with the raw amino-acid sequence, 429 residues long: Adenylosuccinate synthetase (429 aa).

Residues 12–18 (GDEGKGK) and 40–42 (GHT) each bind GTP. The Proton acceptor role is filled by Asp13. Asp13 and Gly40 together coordinate Mg(2+). Residues 13–16 (DEGK), 38–41 (NAGH), Thr127, Arg141, Gln222, Thr237, and Arg301 contribute to the IMP site. Residue His41 is the Proton donor of the active site. 297-303 (ATTGRPR) is a binding site for substrate. GTP-binding positions include Arg303, 329-331 (KLD), and 411-413 (SLG).

It belongs to the adenylosuccinate synthetase family. As to quaternary structure, homodimer. It depends on Mg(2+) as a cofactor.

The protein resides in the cytoplasm. The enzyme catalyses IMP + L-aspartate + GTP = N(6)-(1,2-dicarboxyethyl)-AMP + GDP + phosphate + 2 H(+). It functions in the pathway purine metabolism; AMP biosynthesis via de novo pathway; AMP from IMP: step 1/2. Functionally, plays an important role in the de novo pathway of purine nucleotide biosynthesis. Catalyzes the first committed step in the biosynthesis of AMP from IMP. This Endomicrobium trichonymphae protein is Adenylosuccinate synthetase.